Consider the following 666-residue polypeptide: Probable potassium transport system protein Kup (666 aa).

The next 12 membrane-spanning stretches (helical) occupy residues 16-36 (GFII…LYTM), 58-78 (ISLI…LIAL), 100-120 (PWLI…GALT), 149-169 (IITT…GTGF), 173-193 (IFGP…FFNM), 221-241 (IFIL…YSDL), 253-273 (WPFV…WILA), 294-314 (VYLV…LISG), 343-363 (LYIP…VLAF), 373-393 (YGLA…YYLI), 399-419 (PILA…FFLA), and 424-444 (FMHG…VMFI).

The protein belongs to the HAK/KUP transporter (TC 2.A.72) family.

Its subcellular location is the cell membrane. The catalysed reaction is K(+)(in) + H(+)(in) = K(+)(out) + H(+)(out). Its function is as follows. Transport of potassium into the cell. Likely operates as a K(+):H(+) symporter. This chain is Probable potassium transport system protein Kup, found in Streptococcus pyogenes serotype M3 (strain ATCC BAA-595 / MGAS315).